The primary structure comprises 443 residues: Xaa-Pro dipeptidase (443 aa).

Mn(2+)-binding residues include Asp-246, Asp-257, His-339, Glu-384, and Glu-423.

It belongs to the peptidase M24B family. Bacterial-type prolidase subfamily. It depends on Mn(2+) as a cofactor.

The enzyme catalyses Xaa-L-Pro dipeptide + H2O = an L-alpha-amino acid + L-proline. In terms of biological role, splits dipeptides with a prolyl residue in the C-terminal position. This is Xaa-Pro dipeptidase from Escherichia coli O7:K1 (strain IAI39 / ExPEC).